We begin with the raw amino-acid sequence, 161 residues long: Succinate dehydrogenase assembly factor 2, mitochondrial (161 aa).

A mitochondrion-targeting transit peptide spans 1–31 (MSLLRVTRSSGHLSAVCRLPARSISTTSILL).

This sequence belongs to the SDHAF2 family. In terms of assembly, interacts with the flavoprotein subunit within the SDH catalytic dimer.

The protein localises to the mitochondrion matrix. In terms of biological role, plays an essential role in the assembly of succinate dehydrogenase (SDH), an enzyme complex (also referred to as respiratory complex II) that is a component of both the tricarboxylic acid (TCA) cycle and the mitochondrial electron transport chain, and which couples the oxidation of succinate to fumarate with the reduction of ubiquinone (coenzyme Q) to ubiquinol. Required for flavinylation (covalent attachment of FAD) of the flavoprotein subunit of the SDH catalytic dimer. The chain is Succinate dehydrogenase assembly factor 2, mitochondrial from Aedes aegypti (Yellowfever mosquito).